Consider the following 436-residue polypeptide: UDP-N-acetylmuramate--L-alanine ligase (436 aa).

108–114 (GAHGKTS) lines the ATP pocket.

The protein belongs to the MurCDEF family.

It is found in the cytoplasm. The catalysed reaction is UDP-N-acetyl-alpha-D-muramate + L-alanine + ATP = UDP-N-acetyl-alpha-D-muramoyl-L-alanine + ADP + phosphate + H(+). It participates in cell wall biogenesis; peptidoglycan biosynthesis. Cell wall formation. This Bacillus cytotoxicus (strain DSM 22905 / CIP 110041 / 391-98 / NVH 391-98) protein is UDP-N-acetylmuramate--L-alanine ligase.